We begin with the raw amino-acid sequence, 219 residues long: MLRRILTTSSVRNLTSSTQARVGIPFVIDNEGKGERTYDIYSRLLRDRIVCLMTPVDDFMASALIAQLLFLQSESSKKPIHMYINSPGGSVTAGLAIYDTMQMISAPVATWVIGQASSMGSLLLAAGEKGMRSALPNARIMVHQPSGGAQGTCSDIVIRAEEITRLKKRLNEIYVHHTGISYDEIERTLDRDRFMSAQEALKFGLVDKIEKHTGSMPTD.

A mitochondrion-targeting transit peptide spans 1 to 23 (MLRRILTTSSVRNLTSSTQARVG). Catalysis depends on Ser-118, which acts as the Nucleophile. His-143 is an active-site residue.

It belongs to the peptidase S14 family. In terms of assembly, tetradecamer that assembles into a two heptameric rings with a central cavity.

The protein localises to the mitochondrion matrix. It catalyses the reaction Hydrolysis of proteins to small peptides in the presence of ATP and magnesium. alpha-casein is the usual test substrate. In the absence of ATP, only oligopeptides shorter than five residues are hydrolyzed (such as succinyl-Leu-Tyr-|-NHMec, and Leu-Tyr-Leu-|-Tyr-Trp, in which cleavage of the -Tyr-|-Leu- and -Tyr-|-Trp bonds also occurs).. Clp cleaves peptides in various proteins in a process that requires ATP hydrolysis. Clp may be responsible for a fairly general and central housekeeping function rather than for the degradation of specific substrates. The polypeptide is ATP-dependent Clp protease proteolytic subunit 1, mitochondrial (Caenorhabditis briggsae).